Consider the following 370-residue polypeptide: UDP-galactose transporter homolog 1 (370 aa).

Transmembrane regions (helical) follow at residues 22–42 (ALTL…WSIL), 62–82 (IIIN…YNYV), 115–135 (CNVL…SPIG), 145–165 (LAYL…HFIF), 175–195 (YLVA…HVTT), 204–224 (TLLG…TNST), 242–262 (LMSL…IIFH), 280–300 (LIDI…IFII), 307–327 (IILI…SVIL), and 333–353 (SWEQ…EAFI).

This sequence belongs to the nucleotide-sugar transporter family. SLC35B subfamily.

It is found in the endoplasmic reticulum membrane. Its function is as follows. May be involved in specific transport of UDP-Gal from the cytosol to the Golgi lumen. Involved in the maintenance of optimal conditions for the folding of secretory pathway proteins in the endoplasmic reticulum. The polypeptide is UDP-galactose transporter homolog 1 (HUT1) (Candida albicans (strain SC5314 / ATCC MYA-2876) (Yeast)).